Consider the following 285-residue polypeptide: Cold sensitive U2 snRNA suppressor 2 (285 aa).

The 86-residue stretch at Thr45 to Phe130 folds into the RRM 1 domain. The segment covering Gly135–Asn149 has biased composition (basic and acidic residues). The disordered stretch occupies residues Gly135 to Pro154. At Ser163 the chain carries Phosphoserine. The region spanning Arg183 to Asp265 is the RRM 2 domain. The tract at residues Asp265–Ile285 is disordered. Acidic residues predominate over residues Glu276 to Ile285.

This sequence belongs to the HTATSF1 family. Interacts with PRP11. Associates with the U2 snRNA.

Its function is as follows. U2 snRNP protein which helps to refold U2 into a structure favorable for its binding to SF3b and SF3a prior to spliceosome assembly. Mediates functional interactions between U2 RNA and PRP5. Enforces ATP dependence during formation of the prespliceosome by brokering an interaction between PRP5 and the U2 snRNP that depends on correct U2 RNA structure. The protein is Cold sensitive U2 snRNA suppressor 2 (CUS2) of Saccharomyces cerevisiae (strain ATCC 204508 / S288c) (Baker's yeast).